A 248-amino-acid chain; its full sequence is Coproheme decarboxylase (248 aa).

Fe-coproporphyrin III-binding positions include Arg130, Tyr144–Lys148, His171, Gln184, and Ser222. Tyr144 is an active-site residue.

This sequence belongs to the ChdC family. Type 1 subfamily. The cofactor is Fe-coproporphyrin III.

It catalyses the reaction Fe-coproporphyrin III + 2 H2O2 + 2 H(+) = heme b + 2 CO2 + 4 H2O. The enzyme catalyses Fe-coproporphyrin III + H2O2 + H(+) = harderoheme III + CO2 + 2 H2O. It carries out the reaction harderoheme III + H2O2 + H(+) = heme b + CO2 + 2 H2O. Its pathway is porphyrin-containing compound metabolism; protoheme biosynthesis. Functionally, involved in coproporphyrin-dependent heme b biosynthesis. Catalyzes the decarboxylation of Fe-coproporphyrin III (coproheme) to heme b (protoheme IX), the last step of the pathway. The reaction occurs in a stepwise manner with a three-propionate intermediate. This Geobacillus thermodenitrificans (strain NG80-2) protein is Coproheme decarboxylase.